The chain runs to 346 residues: Histone H1.8 (346 aa).

Low complexity-rich tracts occupy residues 1 to 23 and 38 to 48; these read MAPG…SSRS and PGGPSHSSLPV. 2 disordered regions span residues 1 to 50 and 121 to 346; these read MAPG…PVGR and ATGS…RAEA. The 79-residue stretch at 51-129 folds into the H15 domain; it reads RHPPVLRMVL…GATGSFKLVP (79 aa). Residues 128 to 137 are compositionally biased toward basic residues; it reads VPKHKKKIQP. A compositionally biased stretch (basic and acidic residues) spans 148–167; the sequence is RAGEAKGKGPKKPSEAKEDP. Positions 164–179 match the Nuclear localization signal motif; that stretch reads KEDPPNVGKVKKAAKR. A compositionally biased stretch (basic residues) spans 172–182; that stretch reads KVKKAAKRPAK. 2 stretches are compositionally biased toward basic and acidic residues: residues 205–225 and 251–262; these read KDTR…DKAM and EAYRKTKAESKS. The segment covering 278 to 288 has biased composition (basic residues); it reads TKKKVVAKAKA. The span at 298–309 shows a compositional bias: low complexity; that stretch reads KAAAPAKGSGSK. A compositionally biased stretch (polar residues) spans 334–346; sequence ASSSKVSSQRAEA.

It belongs to the histone H1/H5 family. In terms of tissue distribution, oocyte-specific.

The protein resides in the cytoplasm. Its subcellular location is the nucleus. It localises to the chromosome. Functionally, may play a key role in the control of gene expression during oogenesis and early embryogenesis, presumably through the perturbation of chromatin structure. Essential for meiotic maturation of germinal vesicle-stage oocytes. The somatic type linker histone H1c is rapidly replaced by H1oo in a donor nucleus transplanted into an oocyte. The greater mobility of H1oo as compared to H1c may contribute to this rapid replacement and increased instability of the embryonic chromatin structure. The rapid replacement of H1c with H1oo may play an important role in nuclear remodeling. In Homo sapiens (Human), this protein is Histone H1.8.